A 734-amino-acid chain; its full sequence is Photosystem I P700 chlorophyll a apoprotein A2 (734 aa).

Helical transmembrane passes span 46-69 (IFAS…FHVA), 135-158 (LYTG…LHLQ), 175-199 (LNHH…HVAI), 273-291 (IAHH…GHMY), 330-353 (IHFQ…QHMY), 369-395 (AALY…IFFI), 417-439 (AIIS…LYVH), and 517-535 (FLVH…LILV). The [4Fe-4S] cluster site is built by Cys559 and Cys568. A run of 2 helical transmembrane segments spans residues 575-596 (AFYL…YWHW) and 643-665 (LSVW…MFLI). His654, Met662, and Tyr670 together coordinate chlorophyll a. Trp671 contributes to the phylloquinone binding site. Residues 707–727 (LVGLAHFSVGYIFTYAAFLIA) traverse the membrane as a helical segment.

Belongs to the PsaA/PsaB family. In terms of assembly, the PsaA/B heterodimer binds the P700 chlorophyll special pair and subsequent electron acceptors. PSI consists of a core antenna complex that captures photons, and an electron transfer chain that converts photonic excitation into a charge separation. The eukaryotic PSI reaction center is composed of at least 11 subunits. The cofactor is P700 is a chlorophyll a/chlorophyll a' dimer, A0 is one or more chlorophyll a, A1 is one or both phylloquinones and FX is a shared 4Fe-4S iron-sulfur center..

The protein localises to the plastid. The protein resides in the chloroplast thylakoid membrane. The catalysed reaction is reduced [plastocyanin] + hnu + oxidized [2Fe-2S]-[ferredoxin] = oxidized [plastocyanin] + reduced [2Fe-2S]-[ferredoxin]. Its function is as follows. PsaA and PsaB bind P700, the primary electron donor of photosystem I (PSI), as well as the electron acceptors A0, A1 and FX. PSI is a plastocyanin-ferredoxin oxidoreductase, converting photonic excitation into a charge separation, which transfers an electron from the donor P700 chlorophyll pair to the spectroscopically characterized acceptors A0, A1, FX, FA and FB in turn. Oxidized P700 is reduced on the lumenal side of the thylakoid membrane by plastocyanin. The polypeptide is Photosystem I P700 chlorophyll a apoprotein A2 (Dioscorea elephantipes (Elephant's foot yam)).